A 337-amino-acid polypeptide reads, in one-letter code: Glutathione transferase 3 (337 aa).

Topologically, residues 1-239 (MPTKSTFSRW…NKYQYTLDFC (239 aa)) are cytoplasmic. Phosphoserine occurs at positions 66, 72, 99, and 116. Residues 66–95 (SMTVDQSKDERNEYGSGSGNGSGSGSCDTA) are disordered. Residues 107–132 (KEDDDEKPQSGDETSATKPLSSRNAN) are disordered. Residues 117 to 132 (GDETSATKPLSSRNAN) show a composition bias toward polar residues. Residues 240–260 (LPILTWLLFFRGIPTLVSYYI) form a helical membrane-spanning segment. Residues 261-313 (NFIRYDLNIELDPMTFNLTKFLISLAIFKTCNNKNIDFHSFRCVNQLWTQLCT) are Perinuclear space-facing. A helical membrane pass occupies residues 314-336 (VNRSLGMVPLVFSMVSCLLTLYV). Residue L337 is a topological domain, cytoplasmic.

It is found in the nucleus membrane. This chain is Glutathione transferase 3 (GTT3), found in Saccharomyces cerevisiae (strain ATCC 204508 / S288c) (Baker's yeast).